An 880-amino-acid polypeptide reads, in one-letter code: DNA polymerase I (880 aa).

In terms of domain architecture, 5'-3' exonuclease spans 174–268 (TPEQIIDMKG…SGLEYQGFNR (95 aa)). Residues 302 to 470 (DINVKTVTDV…LREKLVQELE (169 aa)) enclose the 3'-5' exonuclease domain.

It belongs to the DNA polymerase type-A family. Single-chain monomer with multiple functions.

The catalysed reaction is DNA(n) + a 2'-deoxyribonucleoside 5'-triphosphate = DNA(n+1) + diphosphate. In addition to polymerase activity, this DNA polymerase exhibits 3'-5' and 5'-3' exonuclease activity. The polypeptide is DNA polymerase I (polA) (Bacillus subtilis (strain 168)).